Consider the following 317-residue polypeptide: MRNLSGGHVEEFVLVGFPTTPPLQLLLFVLFFAIYLLTLLENALIVFTIWLAPSLHRPMYFFLGHLSFLELWYINVTIPRLLAAFLTQDGRVSYVGCMTQLYFFIALACTECVLLAVMAYDRYLAICGPLLYPSLMPSSLATRLAAASWGSGFFSSMMKLLFISQLSYCGPNIINHFFCDISPLLNLTCSDKEQAELVDFLLALVMILLPLLAVVSSYTAIIAAILRIPTSRGRHKAFSTCAAHLAVVVIYYSSTLFTYARPRAMYTFNHNKIISVLYTIIVPFFNPAIYCLRNKEVKEAFRKTVMGRCHYPRDVQD.

The Extracellular segment spans residues 1–25 (MRNLSGGHVEEFVLVGFPTTPPLQL). Residue Asn3 is glycosylated (N-linked (GlcNAc...) asparagine). Residues 26 to 46 (LLFVLFFAIYLLTLLENALIV) form a helical membrane-spanning segment. At 47–54 (FTIWLAPS) the chain is on the cytoplasmic side. The helical transmembrane segment at 55-75 (LHRPMYFFLGHLSFLELWYIN) threads the bilayer. Residues 76 to 99 (VTIPRLLAAFLTQDGRVSYVGCMT) are Extracellular-facing. A disulfide bond links Cys97 and Cys189. The helical transmembrane segment at 100 to 120 (QLYFFIALACTECVLLAVMAY) threads the bilayer. At 121–139 (DRYLAICGPLLYPSLMPSS) the chain is on the cytoplasmic side. Residues 140-160 (LATRLAAASWGSGFFSSMMKL) traverse the membrane as a helical segment. The Extracellular portion of the chain corresponds to 161–197 (LFISQLSYCGPNIINHFFCDISPLLNLTCSDKEQAEL). The N-linked (GlcNAc...) asparagine glycan is linked to Asn186. The chain crosses the membrane as a helical span at residues 198 to 217 (VDFLLALVMILLPLLAVVSS). The Cytoplasmic segment spans residues 218–237 (YTAIIAAILRIPTSRGRHKA). A helical membrane pass occupies residues 238–258 (FSTCAAHLAVVVIYYSSTLFT). Topologically, residues 259–271 (YARPRAMYTFNHN) are extracellular. Residues 272–292 (KIISVLYTIIVPFFNPAIYCL) traverse the membrane as a helical segment. Over 293–317 (RNKEVKEAFRKTVMGRCHYPRDVQD) the chain is Cytoplasmic.

Belongs to the G-protein coupled receptor 1 family.

It is found in the cell membrane. Its function is as follows. Odorant receptor. The protein is Olfactory receptor 6P1 (OR6P1) of Homo sapiens (Human).